The following is a 237-amino-acid chain: Endonuclease NucS (237 aa).

Belongs to the NucS endonuclease family.

It localises to the cytoplasm. Its function is as follows. Cleaves both 3' and 5' ssDNA extremities of branched DNA structures. This Saccharolobus islandicus (strain L.S.2.15 / Lassen #1) (Sulfolobus islandicus) protein is Endonuclease NucS.